We begin with the raw amino-acid sequence, 421 residues long: 3-phosphoshikimate 1-carboxyvinyltransferase (421 aa).

Lys-19, Ser-20, and Arg-24 together coordinate 3-phosphoshikimate. Position 19 (Lys-19) interacts with phosphoenolpyruvate. Phosphoenolpyruvate is bound by residues Gly-88 and Arg-116. Residues Ser-160, Gln-162, Asp-307, and Lys-334 each contribute to the 3-phosphoshikimate site. Gln-162 lines the phosphoenolpyruvate pocket. Residue Asp-307 is the Proton acceptor of the active site. Arg-338 and Arg-380 together coordinate phosphoenolpyruvate.

This sequence belongs to the EPSP synthase family. Monomer.

It localises to the cytoplasm. The enzyme catalyses 3-phosphoshikimate + phosphoenolpyruvate = 5-O-(1-carboxyvinyl)-3-phosphoshikimate + phosphate. The protein operates within metabolic intermediate biosynthesis; chorismate biosynthesis; chorismate from D-erythrose 4-phosphate and phosphoenolpyruvate: step 6/7. In terms of biological role, catalyzes the transfer of the enolpyruvyl moiety of phosphoenolpyruvate (PEP) to the 5-hydroxyl of shikimate-3-phosphate (S3P) to produce enolpyruvyl shikimate-3-phosphate and inorganic phosphate. The chain is 3-phosphoshikimate 1-carboxyvinyltransferase from Thermotoga sp. (strain RQ2).